Reading from the N-terminus, the 356-residue chain is tRNA N6-adenosine threonylcarbamoyltransferase (356 aa).

Residues H110 and H114 each contribute to the Fe cation site. Substrate contacts are provided by residues L132–G136, D165, G178, D182, and N288. A Fe cation-binding site is contributed by D316.

Belongs to the KAE1 / TsaD family. Fe(2+) is required as a cofactor.

The protein localises to the cytoplasm. It carries out the reaction L-threonylcarbamoyladenylate + adenosine(37) in tRNA = N(6)-L-threonylcarbamoyladenosine(37) in tRNA + AMP + H(+). Required for the formation of a threonylcarbamoyl group on adenosine at position 37 (t(6)A37) in tRNAs that read codons beginning with adenine. Is involved in the transfer of the threonylcarbamoyl moiety of threonylcarbamoyl-AMP (TC-AMP) to the N6 group of A37, together with TsaE and TsaB. TsaD likely plays a direct catalytic role in this reaction. The chain is tRNA N6-adenosine threonylcarbamoyltransferase from Maridesulfovibrio salexigens (strain ATCC 14822 / DSM 2638 / NCIMB 8403 / VKM B-1763) (Desulfovibrio salexigens).